Consider the following 705-residue polypeptide: Polyribonucleotide nucleotidyltransferase (705 aa).

2 residues coordinate Mg(2+): Asp-487 and Asp-493. In terms of domain architecture, KH spans 554-613 (PKILTMTINPDKIRDVIGPSGKQINKIIEETGVKIDIEQDGTIFISSTDESGNQKAKKII). The region spanning 623 to 691 (GQLYLGKVKR…KQGRVNLSRK (69 aa)) is the S1 motif domain.

Belongs to the polyribonucleotide nucleotidyltransferase family. Homodimer. Component of a possible RNA degradosome complex composed of rny, rnjA, rnjB, pnp, pfkA and eno (although rnjA and rnjB's presence is unclear). RNA helicase CshA may also be a member of this complex. Mg(2+) serves as cofactor.

The protein localises to the cytoplasm. The catalysed reaction is RNA(n+1) + phosphate = RNA(n) + a ribonucleoside 5'-diphosphate. Functionally, involved in mRNA degradation. Catalyzes the phosphorolysis of single-stranded polyribonucleotides processively in the 3'- to 5'-direction. Necessary for competence development in Bacillus subtilis. May be necessary for modification of the srfA transcript (stabilization or translation activation). Involved in processing precursor type I toxin-antitoxin RNAs antitoxin SR4 and SR5 RNAs to their mature forms. The polypeptide is Polyribonucleotide nucleotidyltransferase (Bacillus subtilis (strain 168)).